Consider the following 265-residue polypeptide: MTDIQCVIFDWAGTIIDFGSLDPVLAFQSAFNAAGIQIDTDRIRQDMGIEKHEHIAKLAKMPEVQRAWFAKYKRGITDADQLQLFNYFEQFLLNRLSTETTLTPAVLQVQTYLKAHHIHIATTTGYTKAMLAIAAKQAGLLGYHPELMVSKEDVAAGRPAPDMINHIMTAFNITDPQTVVKVGDTVIDMQEGKNAGVLTVGLIESSSLLGLSQAKLIDLPQKTRLAKFAEITKTLKAAGADYVIHNLSELPAILAKYQTPQKEHA.

The active-site Nucleophile is the D10. Mg(2+)-binding residues include D10 and A12. K51 functions as the Schiff-base intermediate with substrate in the catalytic mechanism. D184 lines the Mg(2+) pocket.

The protein belongs to the HAD-like hydrolase superfamily. PhnX family. As to quaternary structure, homodimer. It depends on Mg(2+) as a cofactor.

It catalyses the reaction phosphonoacetaldehyde + H2O = acetaldehyde + phosphate + H(+). In terms of biological role, involved in phosphonate degradation. The protein is Phosphonoacetaldehyde hydrolase of Latilactobacillus sakei subsp. sakei (strain 23K) (Lactobacillus sakei subsp. sakei).